The sequence spans 163 residues: MCKEGNTIATLVDIVRPVVAPVIPKPFELVDIEYEKLGGNYVLSILVDKPEGITVEDTADLTDIISPLLDTIKPDPFPEQYMLEISSPGLERPLKTAQSLMNAVGHYINVSLYQAIDKVKVFEGDLTAFDGETLKMTYLDKTQQKTVTIPYKMVAKARLAVKL.

It belongs to the RimP family.

The protein resides in the cytoplasm. In terms of biological role, required for maturation of 30S ribosomal subunits. The protein is Ribosome maturation factor RimP of Streptococcus mutans serotype c (strain ATCC 700610 / UA159).